Here is a 408-residue protein sequence, read N- to C-terminus: Translation initiation factor 2 subunit gamma (408 aa).

In terms of domain architecture, tr-type G spans Q4–K201. Residues G13 to T20 are G1. D16, T20, G41, and S43 together coordinate Mg(2+). A GTP-binding site is contributed by D16–T21. The tract at residues G41 to R45 is G2. Positions 56, 59, 71, and 74 each coordinate Zn(2+). Residues D88–G91 form a G3 region. GTP contacts are provided by residues N144–D147 and S179–Q181. A G4 region spans residues N144–D147. A G5 region spans residues S179–Q181.

Belongs to the TRAFAC class translation factor GTPase superfamily. Classic translation factor GTPase family. EIF2G subfamily. Heterotrimer composed of an alpha, a beta and a gamma chain. It depends on Mg(2+) as a cofactor.

It catalyses the reaction GTP + H2O = GDP + phosphate + H(+). Its function is as follows. eIF-2 functions in the early steps of protein synthesis by forming a ternary complex with GTP and initiator tRNA. This is Translation initiation factor 2 subunit gamma from Methanothermobacter thermautotrophicus (strain ATCC 29096 / DSM 1053 / JCM 10044 / NBRC 100330 / Delta H) (Methanobacterium thermoautotrophicum).